The chain runs to 105 residues: Phosphoribosyl-ATP pyrophosphatase (105 aa).

This sequence belongs to the PRA-PH family.

The protein resides in the cytoplasm. The enzyme catalyses 1-(5-phospho-beta-D-ribosyl)-ATP + H2O = 1-(5-phospho-beta-D-ribosyl)-5'-AMP + diphosphate + H(+). Its pathway is amino-acid biosynthesis; L-histidine biosynthesis; L-histidine from 5-phospho-alpha-D-ribose 1-diphosphate: step 2/9. This chain is Phosphoribosyl-ATP pyrophosphatase, found in Vesicomyosocius okutanii subsp. Calyptogena okutanii (strain HA).